A 230-amino-acid chain; its full sequence is uncharacterized protein (230 aa).

7 helical membrane passes run 8–28 (SLILTALIGGIPSSTAVTMAF), 45–65 (SIILSWLVMFFRVIFYTFIIF), 72–92 (LVLLLLPYFALLLMFAIFLYL), 109–129 (PFSLSQAFTFGLIYSTISVIS), 141–161 (IYVLSFLSGIMDIDAITLLLA), 176–196 (MGILLAVMSNNLFKSGYAIIF), and 203–223 (IYFLFVALFTLIYTTTLLILF).

It to P.aeruginosa PA0043 and M.thermoautotrophicum MTH1451.

It localises to the cell membrane. This is an uncharacterized protein from Aquifex aeolicus (strain VF5).